The primary structure comprises 202 residues: Urease accessory protein UreG (202 aa).

13 to 20 (GPVGAGKT) lines the GTP pocket.

Belongs to the SIMIBI class G3E GTPase family. UreG subfamily. In terms of assembly, homodimer. UreD, UreF and UreG form a complex that acts as a GTP-hydrolysis-dependent molecular chaperone, activating the urease apoprotein by helping to assemble the nickel containing metallocenter of UreC. The UreE protein probably delivers the nickel.

The protein localises to the cytoplasm. In terms of biological role, facilitates the functional incorporation of the urease nickel metallocenter. This process requires GTP hydrolysis, probably effectuated by UreG. The protein is Urease accessory protein UreG of Dinoroseobacter shibae (strain DSM 16493 / NCIMB 14021 / DFL 12).